The following is a 95-amino-acid chain: Large ribosomal subunit protein bL25 (95 aa).

This sequence belongs to the bacterial ribosomal protein bL25 family. In terms of assembly, part of the 50S ribosomal subunit; part of the 5S rRNA/L5/L18/L25 subcomplex. Contacts the 5S rRNA. Binds to the 5S rRNA independently of L5 and L18.

This is one of the proteins that binds to the 5S RNA in the ribosome where it forms part of the central protuberance. The sequence is that of Large ribosomal subunit protein bL25 from Actinobacillus pleuropneumoniae serotype 5b (strain L20).